Reading from the N-terminus, the 307-residue chain is Mitochondrial brown fat uncoupling protein 1 (307 aa).

Residues 1-10 are Mitochondrial intermembrane-facing; sequence MVSSTTSEVQ. The helical transmembrane segment at 11-32 threads the bilayer; the sequence is PTMGVKIFSAGVSACLADIITF. 3 Solcar repeats span residues 11 to 102, 111 to 201, and 210 to 295; these read PTMG…VQEY, ASLG…MKGA, and DDVP…LKKE. The Mitochondrial matrix segment spans residues 33 to 73; the sequence is PLDTAKVRLQIQGEGQASSTIRYKGVLGTITTLAKTEGLPK. Lys56 lines the fatty acid 16:0 pocket. A helical transmembrane segment spans residues 74 to 96; the sequence is LYSGLPAGIQRQISFASLRIGLY. Residues 97 to 116 lie on the Mitochondrial intermembrane side of the membrane; that stretch reads DTVQEYFSSGRETPASLGSK. A helical membrane pass occupies residues 117–133; sequence ISAGLMTGGVAVFIGQP. Residues 134–178 are Mitochondrial matrix-facing; sequence TEVVKVRMQAQSHLHGIKPRYTGTYNAYRVIATTESLSTLWKGTT. The chain crosses the membrane as a helical span at residues 179 to 195; the sequence is PNLMRNVIINCTELVTY. At 196–212 the chain is on the mitochondrial intermembrane side; it reads DLMKGALVNHHILADDV. Residues 213–232 traverse the membrane as a helical segment; that stretch reads PCHLLSALVAGFCTTLLASP. The Mitochondrial matrix segment spans residues 233–266; that stretch reads VDVVKTRFINSLPGQYPSVPSCAMTMYTKEGPAA. Cys254 carries the cysteine sulfenic acid (-SOH) modification. The helical transmembrane segment at 267 to 289 threads the bilayer; sequence FFKGFAPSFLRLGSWNVIMFVCF. Lys269 provides a ligand contact to fatty acid 16:0. The Mitochondrial intermembrane segment spans residues 290–307; the sequence is EQLKKELMKSRQTVDCTT.

It belongs to the mitochondrial carrier (TC 2.A.29) family. Most probably functions as a monomer. Binds one purine nucleotide per monomer. However, has also been suggested to function as a homodimer or a homotetramer. Tightly associates with cardiolipin in the mitochondrion inner membrane; may stabilize and regulate its activity. May undergo ubiquitin-mediated proteasomal degradation. Post-translationally, may undergo sulfenylation upon cold exposure. May increase the sensitivity of UCP1 thermogenic function to the activation by noradrenaline probably through structural effects. As to expression, brown adipose tissue.

The protein resides in the mitochondrion inner membrane. The catalysed reaction is H(+)(in) = H(+)(out). Its activity is regulated as follows. Has no constitutive proton transporter activity and has to be activated by long-chain fatty acids/LCFAs. Inhibited by purine nucleotides. Both purine nucleotides and LCFAs bind the cytosolic side of the transporter and directly compete to activate or inhibit it. Activated by noradrenaline and reactive oxygen species. Despite lacking canonical translational encoding for selenocysteine, a small pool of the protein has been observed to selectively incorporate selenocysteine at 'Cys-254'. Selenocysteine-modified protein is highly sensitive to redox modification and may constitute a pool of protein highly sensitive to activation by elevated levels of reactive oxygen species (ROS). Functionally, mitochondrial protein responsible for thermogenic respiration, a specialized capacity of brown adipose tissue and beige fat that participates in non-shivering adaptive thermogenesis to temperature and diet variations and more generally to the regulation of energy balance. Functions as a long-chain fatty acid/LCFA and proton symporter, simultaneously transporting one LCFA and one proton through the inner mitochondrial membrane. However, LCFAs remaining associated with the transporter via their hydrophobic tails, it results in an apparent transport of protons activated by LCFAs. Thereby, dissipates the mitochondrial proton gradient and converts the energy of substrate oxydation into heat instead of ATP. Regulates the production of reactive oxygen species/ROS by mitochondria. The sequence is that of Mitochondrial brown fat uncoupling protein 1 from Rattus norvegicus (Rat).